Consider the following 148-residue polypeptide: Ubiquitin-conjugating enzyme E2 4 (148 aa).

Residues 1 to 22 (MSSSKRIAKELSDLERDPPTSC) are disordered. In terms of domain architecture, UBC core spans 2–148 (SSSKRIAKEL…AREWTKKYAV (147 aa)). The segment covering 7–18 (IAKELSDLERDP) has biased composition (basic and acidic residues). The residue at position 12 (S12) is a Phosphoserine. The active-site Glycyl thioester intermediate is C86. K91 participates in a covalent cross-link: Glycyl lysine isopeptide (Lys-Gly) (interchain with G-Cter in ubiquitin).

This sequence belongs to the ubiquitin-conjugating enzyme family. As to quaternary structure, interacts with TUL1. The N-terminus is blocked.

It catalyses the reaction S-ubiquitinyl-[E1 ubiquitin-activating enzyme]-L-cysteine + [E2 ubiquitin-conjugating enzyme]-L-cysteine = [E1 ubiquitin-activating enzyme]-L-cysteine + S-ubiquitinyl-[E2 ubiquitin-conjugating enzyme]-L-cysteine.. It participates in protein modification; protein ubiquitination. E2 ubiquitin-conjugating enzyme that catalyzes the covalent attachment of ubiquitin to other proteins. Mediates the selective degradation of short-lived and abnormal proteins. Mediates ubiquitination of PEX5. In Saccharomyces cerevisiae (strain ATCC 204508 / S288c) (Baker's yeast), this protein is Ubiquitin-conjugating enzyme E2 4.